Here is a 199-residue protein sequence, read N- to C-terminus: Shikimate kinase (199 aa).

Residue 32-37 (GSGKTS) coordinates ATP. Position 36 (threonine 36) interacts with Mg(2+). Substrate is bound by residues aspartate 54, arginine 78, and glycine 100. Arginine 138 is an ATP binding site. Substrate is bound at residue arginine 157.

Belongs to the shikimate kinase family. As to quaternary structure, monomer. It depends on Mg(2+) as a cofactor.

The protein localises to the cytoplasm. The catalysed reaction is shikimate + ATP = 3-phosphoshikimate + ADP + H(+). The protein operates within metabolic intermediate biosynthesis; chorismate biosynthesis; chorismate from D-erythrose 4-phosphate and phosphoenolpyruvate: step 5/7. Functionally, catalyzes the specific phosphorylation of the 3-hydroxyl group of shikimic acid using ATP as a cosubstrate. The protein is Shikimate kinase of Synechococcus sp. (strain CC9605).